The following is a 75-amino-acid chain: Exodeoxyribonuclease 7 small subunit (75 aa).

This sequence belongs to the XseB family. As to quaternary structure, heterooligomer composed of large and small subunits.

It is found in the cytoplasm. It catalyses the reaction Exonucleolytic cleavage in either 5'- to 3'- or 3'- to 5'-direction to yield nucleoside 5'-phosphates.. In terms of biological role, bidirectionally degrades single-stranded DNA into large acid-insoluble oligonucleotides, which are then degraded further into small acid-soluble oligonucleotides. In Clostridium perfringens (strain ATCC 13124 / DSM 756 / JCM 1290 / NCIMB 6125 / NCTC 8237 / Type A), this protein is Exodeoxyribonuclease 7 small subunit.